The following is an 842-amino-acid chain: MVVSVTIRRRFVLLLLACTCLLSRRLCFGEDRITFSSPIKDSESETLLCKSGIFRFGFFTPVNSTTRLRYVGIWYEKIPIQTVVWVANKDSPINDTSGVISIYQDGNLAVTDGRNRLVWSTNVSVPVAPNATWVQLMDSGNLMLQDNRNNGEILWESFKHPYDSFMPRMTLGTDGRTGGNLKLTSWTSHDDPSTGNYTAGIAPFTFPELLIWKNNVPTWRSGPWNGQVFIGLPNMDSLLFLDGFNLNSDNQGTISMSYANDSFMYHFNLDPEGIIYQKDWSTSMRTWRIGVKFPYTDCDAYGRCGRFGSCHAGENPPCKCVKGFVPKNNTEWNGGNWSNGCMRKAPLQCERQRNVSNGGGGGKADGFLKLQKMKVPISAERSEASEQVCPKVCLDNCSCTAYAYDRGIGCMLWSGDLVDMQSFLGSGIDLFIRVAHSELKTHSNLAVMIAAPVIGVMLIAAVCVLLACRKYKKRPAPAKDRSAELMFKRMEALTSDNESASNQIKLKELPLFEFQVLATSTDSFSLRNKLGQGGFGPVYKGKLPEGQEIAVKRLSRKSGQGLEELMNEVVVISKLQHRNLVKLLGCCIEGEERMLVYEYMPKKSLDAYLFDPMKQKILDWKTRFNIMEGICRGLLYLHRDSRLKIIHRDLKASNILLDENLNPKISDFGLARIFRANEDEANTRRVVGTYGYMSPEYAMEGFFSEKSDVFSLGVIFLEIISGRRNSSSHKEENNLNLLAYAWKLWNDGEAASLADPAVFDKCFEKEIEKCVHIGLLCVQEVANDRPNVSNVIWMLTTENMSLADPKQPAFIVRRGASEAESSDQSSQKVSINDVSLTAVTGR.

Residues 1–29 form the signal peptide; the sequence is MVVSVTIRRRFVLLLLACTCLLSRRLCFG. The Extracellular portion of the chain corresponds to 30–444; that stretch reads EDRITFSSPI…AHSELKTHSN (415 aa). In terms of domain architecture, Bulb-type lectin spans 32–157; sequence RITFSSPIKD…RNNGEILWES (126 aa). Residues asparagine 63, asparagine 94, asparagine 122, asparagine 130, asparagine 196, and asparagine 260 are each glycosylated (N-linked (GlcNAc...) asparagine). The 37-residue stretch at 294–330 folds into the EGF-like; atypical domain; sequence PYTDCDAYGRCGRFGSCHAGENPPCKCVKGFVPKNNT. Intrachain disulfides connect cysteine 298–cysteine 310 and cysteine 304–cysteine 318. Residues asparagine 328, asparagine 336, asparagine 354, and asparagine 396 are each glycosylated (N-linked (GlcNAc...) asparagine). Residues 349 to 435 form the PAN domain; that stretch reads CERQRNVSNG…SGIDLFIRVA (87 aa). 2 disulfides stabilise this stretch: cysteine 389-cysteine 410 and cysteine 393-cysteine 399. A helical membrane pass occupies residues 445 to 465; sequence LAVMIAAPVIGVMLIAAVCVL. Topologically, residues 466 to 842 are cytoplasmic; sequence LACRKYKKRP…DVSLTAVTGR (377 aa). The region spanning 524 to 810 is the Protein kinase domain; sequence FSLRNKLGQG…SLADPKQPAF (287 aa). ATP is bound by residues 530–538 and lysine 552; that span reads LGQGGFGPV. 2 positions are modified to phosphoserine: serine 558 and serine 573. The segment at 613–630 is caM-binding; the sequence is MKQKILDWKTRFNIMEGI. Aspartate 649 functions as the Proton acceptor in the catalytic mechanism. Phosphoserine is present on residues serine 653 and serine 666. Position 683 is a phosphothreonine (threonine 683). 4 positions are modified to phosphoserine: serine 726, serine 727, serine 821, and serine 830. The tract at residues 814 to 842 is disordered; that stretch reads RGASEAESSDQSSQKVSINDVSLTAVTGR. A compositionally biased stretch (low complexity) spans 818-827; sequence EAESSDQSSQ. Positions 828–842 are enriched in polar residues; sequence KVSINDVSLTAVTGR. At threonine 837 the chain carries Phosphothreonine.

This sequence belongs to the protein kinase superfamily. Ser/Thr protein kinase family.

It localises to the cell membrane. The enzyme catalyses L-seryl-[protein] + ATP = O-phospho-L-seryl-[protein] + ADP + H(+). It carries out the reaction L-threonyl-[protein] + ATP = O-phospho-L-threonyl-[protein] + ADP + H(+). The sequence is that of G-type lectin S-receptor-like serine/threonine-protein kinase At1g11330 from Arabidopsis thaliana (Mouse-ear cress).